The sequence spans 327 residues: Clavesin-2 (327 aa).

Residues 96 to 257 (IKQALKDGFP…EFGGMLPPYD (162 aa)) form the CRAL-TRIO domain. The segment at 289–327 (DKELSPKSMKRSQSVVDPTALKRMDKSEEENMQPLLALD) is disordered.

Forms a complex with clathrin heavy chain and gamma-adaptin.

The protein resides in the golgi apparatus. It is found in the trans-Golgi network membrane. The protein localises to the early endosome membrane. It localises to the cytoplasmic vesicle. Its subcellular location is the clathrin-coated vesicle. In terms of biological role, required for normal morphology of late endosomes and/or lysosomes in neurons. Binds phosphatidylinositol 3,5-bisphosphate (PtdIns(3,5)P2). This Mus musculus (Mouse) protein is Clavesin-2 (Clvs2).